The following is a 116-amino-acid chain: Large ribosomal subunit protein bL17 (116 aa).

This sequence belongs to the bacterial ribosomal protein bL17 family. Part of the 50S ribosomal subunit. Contacts protein L32.

This chain is Large ribosomal subunit protein bL17, found in Prochlorococcus marinus subsp. pastoris (strain CCMP1986 / NIES-2087 / MED4).